Reading from the N-terminus, the 1138-residue chain is Transmembrane channel-like protein 3 (1138 aa).

Positions M1 to A15 are enriched in low complexity. Disordered stretches follow at residues M1–K20 and N29–D54. Over M1 to W155 the chain is Cytoplasmic. The chain crosses the membrane as a helical span at residues L156–L176. At L177–D202 the chain is on the extracellular side. A helical transmembrane segment spans residues T203 to S223. Topologically, residues D224 to R233 are cytoplasmic. The chain crosses the membrane as a helical span at residues L234–L254. The Extracellular portion of the chain corresponds to K255 to R327. N-linked (GlcNAc...) asparagine glycosylation is present at N272. A helical transmembrane segment spans residues I328–V348. Residues V349–E369 are Cytoplasmic-facing. The chain crosses the membrane as a helical span at residues V370–A390. Topologically, residues L391–R401 are extracellular. Residues F402–L422 traverse the membrane as a helical segment. The Cytoplasmic segment spans residues L423–M508. Residues L509–F529 traverse the membrane as a helical segment. Residues R530 to G569 lie on the Extracellular side of the membrane. Residues M570 to I590 form a helical membrane-spanning segment. Over G591–N618 the chain is Cytoplasmic. The helical transmembrane segment at F619–I639 threads the bilayer. Residues A640–V676 are Extracellular-facing. A helical membrane pass occupies residues I677–I697. Residues Y698–V1138 are Cytoplasmic-facing. Residues N753–D763 show a composition bias toward polar residues. 3 disordered regions span residues N753–S859, S973–P1005, and P1065–D1095. Residues G764–G773 are compositionally biased toward basic and acidic residues. Polar residues-rich tracts occupy residues S777–N795 and T804–V813. The segment covering T828–A845 has biased composition (low complexity). Positions H989–R998 are enriched in basic residues. Residues S1074–D1095 are compositionally biased toward low complexity.

The protein belongs to the TMC family. In terms of tissue distribution, expressed in a range of tissues including cerebrum, cerebellum, retina, cochlea, lung, liver and heart. Also expressed in the apical, medial and basal portions of the basillar papilla.

The protein localises to the membrane. In terms of biological role, probable component of an ion channel. This Gallus gallus (Chicken) protein is Transmembrane channel-like protein 3.